The following is a 318-amino-acid chain: 2-keto-3-deoxygluconate permease (318 aa).

10 consecutive transmembrane segments (helical) span residues 10–30 (LPGG…TLWP), 42–62 (GLIS…GATI), 82–102 (IAMA…GGVP), 109–129 (LSVL…YAAL), 139–159 (AGAV…LILG), 163–183 (LASF…LGFA), 194–214 (FFAQ…GNTL), 224–244 (ASGV…LLLA), 257–277 (VAAS…AGMA), and 289–309 (ALVA…TALY).

This sequence belongs to the KdgT transporter family.

It is found in the cell inner membrane. The catalysed reaction is 2-dehydro-3-deoxy-D-gluconate(in) + H(+)(in) = 2-dehydro-3-deoxy-D-gluconate(out) + H(+)(out). Functionally, catalyzes the proton-dependent uptake of 2-keto-3-deoxygluconate (KDG) into the cell. In Xanthomonas euvesicatoria pv. vesicatoria (strain 85-10) (Xanthomonas campestris pv. vesicatoria), this protein is 2-keto-3-deoxygluconate permease.